The sequence spans 944 residues: 2-oxoglutarate dehydrogenase E1 component (944 aa).

Positions 915–944 (RRRSSPAEGDPTVHKKEQERIVSDSLTRKN) are disordered. A compositionally biased stretch (basic and acidic residues) spans 925–936 (PTVHKKEQERIV).

It belongs to the alpha-ketoglutarate dehydrogenase family. Homodimer. Part of the 2-oxoglutarate dehydrogenase (OGDH) complex composed of E1 (2-oxoglutarate dehydrogenase), E2 (dihydrolipoamide succinyltransferase) and E3 (dihydrolipoamide dehydrogenase); the complex contains multiple copies of the three enzymatic components (E1, E2 and E3). Thiamine diphosphate serves as cofactor.

The enzyme catalyses N(6)-[(R)-lipoyl]-L-lysyl-[protein] + 2-oxoglutarate + H(+) = N(6)-[(R)-S(8)-succinyldihydrolipoyl]-L-lysyl-[protein] + CO2. Functionally, E1 component of the 2-oxoglutarate dehydrogenase (OGDH) complex which catalyzes the decarboxylation of 2-oxoglutarate, the first step in the conversion of 2-oxoglutarate to succinyl-CoA and CO(2). The polypeptide is 2-oxoglutarate dehydrogenase E1 component (Bacillus velezensis (strain DSM 23117 / BGSC 10A6 / LMG 26770 / FZB42) (Bacillus amyloliquefaciens subsp. plantarum)).